A 92-amino-acid polypeptide reads, in one-letter code: MARSIKKGPFIEKSLYQKVLSSFGSEKRVVIKTYSRSSTIIPEMVSLTISVYNGKTFIPIYITEDLVGHKLGEFSPTRIFRGHAKSDKKGRK.

This sequence belongs to the universal ribosomal protein uS19 family.

Functionally, protein S19 forms a complex with S13 that binds strongly to the 16S ribosomal RNA. The protein is Small ribosomal subunit protein uS19 of Borreliella afzelii (strain PKo) (Borrelia afzelii).